A 249-amino-acid polypeptide reads, in one-letter code: GTP cyclohydrolase 1 type 2 homolog (249 aa).

The a divalent metal cation site is built by His64, His65, Asp102, His217, and Glu221.

It belongs to the GTP cyclohydrolase I type 2/NIF3 family. Homohexamer.

The protein is GTP cyclohydrolase 1 type 2 homolog of Neisseria meningitidis serogroup A / serotype 4A (strain DSM 15465 / Z2491).